A 238-amino-acid chain; its full sequence is Lytic polysaccharide monooxygenase NCU01050 (238 aa).

An N-terminal signal peptide occupies residues 1–15 (MKVLAPLVLASAASA). Residue His16 participates in Cu(2+) binding. Glu45 contacts O2. Disulfide bonds link Cys54–Cys186 and Cys156–Cys238. A glycan (N-linked (GlcNAc...) asparagine) is linked at Asn75. Cu(2+) is bound at residue His99. O2 contacts are provided by His172 and Gln181. His172 (proton donor) is an active-site residue. Tyr183 contacts Cu(2+).

Belongs to the polysaccharide monooxygenase AA9 family. Monomer. It depends on Cu(2+) as a cofactor. In terms of processing, N-linked glycans containing mannose and N-acetylglucosamine.

It is found in the secreted. It catalyses the reaction [(1-&gt;4)-beta-D-glucosyl]n+m + reduced acceptor + O2 = 4-dehydro-beta-D-glucosyl-[(1-&gt;4)-beta-D-glucosyl]n-1 + [(1-&gt;4)-beta-D-glucosyl]m + acceptor + H2O.. It functions in the pathway glycan metabolism; cellulose degradation. Its activity is regulated as follows. Inhibited by increasing levels of ascorbic acid. In terms of biological role, catalyzes the oxidative cleavage of glycosidic bonds in cellulosic substrates via a copper-dependent mechanism. In the presence of an exogenous reductant ascorbic acid, degrades phosphoric acid swollen cellulose (PASC) to cello-oligosaccharides and 4-ketoaldoses, the end products oxidized at the non-reducing end. Somewhat active toward tamarind xyloglucan and konjac glucomannan, with improved activity with glucomannan in the presence of PASC. H(2)O(2) is able to substitute for O(2) in reactions with PASC, xyloglucan and glucomannan. Very weak activity on cellopentaose. No activity with birchwood xylan or ivory nut mannan. Disrupts plant cell wall polysaccharide substrates, such as recalcitrant crystalline cellulose. The sequence is that of Lytic polysaccharide monooxygenase NCU01050 from Neurospora crassa (strain ATCC 24698 / 74-OR23-1A / CBS 708.71 / DSM 1257 / FGSC 987).